We begin with the raw amino-acid sequence, 342 residues long: Ribosomal RNA small subunit methyltransferase C (342 aa).

The protein belongs to the methyltransferase superfamily. RsmC family. As to quaternary structure, monomer.

It is found in the cytoplasm. It catalyses the reaction guanosine(1207) in 16S rRNA + S-adenosyl-L-methionine = N(2)-methylguanosine(1207) in 16S rRNA + S-adenosyl-L-homocysteine + H(+). Its function is as follows. Specifically methylates the guanine in position 1207 of 16S rRNA in the 30S particle. In Shewanella loihica (strain ATCC BAA-1088 / PV-4), this protein is Ribosomal RNA small subunit methyltransferase C.